Here is a 328-residue protein sequence, read N- to C-terminus: Phenylalanine--tRNA ligase alpha subunit (328 aa).

Glu253 serves as a coordination point for Mg(2+).

Belongs to the class-II aminoacyl-tRNA synthetase family. Phe-tRNA synthetase alpha subunit type 1 subfamily. Tetramer of two alpha and two beta subunits. Requires Mg(2+) as cofactor.

Its subcellular location is the cytoplasm. It carries out the reaction tRNA(Phe) + L-phenylalanine + ATP = L-phenylalanyl-tRNA(Phe) + AMP + diphosphate + H(+). The polypeptide is Phenylalanine--tRNA ligase alpha subunit (Coxiella burnetii (strain Dugway 5J108-111)).